A 665-amino-acid chain; its full sequence is Cyclic nucleotide-gated cation channel subunit A (665 aa).

Over 1-110 the chain is Cytoplasmic; that stretch reads MRHFKVKAMV…DPTLQSHYRW (110 aa). Residues 111-131 traverse the membrane as a helical segment; that stretch reads LAIVSLAVLYNIIFVVGRAVF. Residues 132-138 lie on the Extracellular side of the membrane; the sequence is WEINKSA. N135 carries an N-linked (GlcNAc...) asparagine glycan. Residues 139–159 form a helical membrane-spanning segment; the sequence is PAFWYTLDYLCDFIYLLDTLV. At 160–186 the chain is on the cytoplasmic side; the sequence is HMHEGFLDQGLLVRDAFRLRRHYFHTK. Residues 187–207 traverse the membrane as a helical segment; it reads GWYLDVLSMLPTDLAYIWWPP. Residues 208 to 253 lie on the Extracellular side of the membrane; sequence ETCSSLYLPCPVIVRLNRLLRINRLWEWFDRTETATGYPNAFRICK. A helical transmembrane segment spans residues 254–274; the sequence is VVLAILVLIHWNACMYFAISY. At 275 to 325 the chain is on the cytoplasmic side; that stretch reads EIGFSSDSWVYNLNGTRNNTLQRQYIYSFYWSTLTLTTIGETPTPENDVEY. Residues 326 to 346 form a helical membrane-spanning segment; sequence LFVVADFLAGVLIFATIVGNI. Topologically, residues 347-481 are extracellular; sequence GSMISNMNVA…GKLSVVGDDG (135 aa). 3',5'-cyclic GMP is bound by residues 437–559, E496, and R511; that span reads LLEA…DGLL. The helical transmembrane segment at 482–502 threads the bilayer; the sequence is ITVLATLGAGSVFGEVSVLEI. Residues 503-665 lie on the Cytoplasmic side of the membrane; that stretch reads AGNRTGNRRT…SSDAAKQNTL (163 aa). Positions 633-665 are disordered; sequence RSGRLYSLQPKRRPRSRPDATAKSSDAAKQNTL. The span at 654–665 shows a compositional bias: polar residues; the sequence is AKSSDAAKQNTL.

Belongs to the cyclic nucleotide-gated cation channel (TC 1.A.1.5) family. In terms of tissue distribution, expressed in antennae and the visual system.

It is found in the membrane. Its function is as follows. Approximately 50-fold more sensitive to cGMP than to cAMP. May be involved in transduction cascades of both invertebrate photoreceptors and olfactory sensillae. This Drosophila melanogaster (Fruit fly) protein is Cyclic nucleotide-gated cation channel subunit A (CngA).